Here is a 160-residue protein sequence, read N- to C-terminus: Transcription antitermination protein NusB (160 aa).

This sequence belongs to the NusB family.

Involved in transcription antitermination. Required for transcription of ribosomal RNA (rRNA) genes. Binds specifically to the boxA antiterminator sequence of the ribosomal RNA (rrn) operons. The polypeptide is Transcription antitermination protein NusB (Chlamydia pneumoniae (Chlamydophila pneumoniae)).